Consider the following 302-residue polypeptide: Probable 5-dehydro-4-deoxyglucarate dehydratase (302 aa).

The protein belongs to the DapA family.

The enzyme catalyses 5-dehydro-4-deoxy-D-glucarate + H(+) = 2,5-dioxopentanoate + CO2 + H2O. It functions in the pathway carbohydrate acid metabolism; D-glucarate degradation; 2,5-dioxopentanoate from D-glucarate: step 2/2. This chain is Probable 5-dehydro-4-deoxyglucarate dehydratase, found in Rhizobium rhizogenes (strain K84 / ATCC BAA-868) (Agrobacterium radiobacter).